Here is a 276-residue protein sequence, read N- to C-terminus: Undecaprenyl-diphosphatase (276 aa).

8 helical membrane passes run 1 to 21, 39 to 59, 84 to 104, 115 to 135, 159 to 179, 188 to 208, 222 to 242, and 253 to 273; these read MSWL…FLPV, AGAS…LIYF, YRLG…GLLF, LWLV…AEYY, LALM…LFLG, FGFL…LPDA, QLIV…AWFL, and FVGY…TGVL.

The protein belongs to the UppP family.

It is found in the cell membrane. It carries out the reaction di-trans,octa-cis-undecaprenyl diphosphate + H2O = di-trans,octa-cis-undecaprenyl phosphate + phosphate + H(+). Functionally, catalyzes the dephosphorylation of undecaprenyl diphosphate (UPP). Confers resistance to bacitracin. The chain is Undecaprenyl-diphosphatase from Mycolicibacterium smegmatis (strain ATCC 700084 / mc(2)155) (Mycobacterium smegmatis).